The sequence spans 167 residues: Phosphopantetheine adenylyltransferase (167 aa).

A substrate-binding site is contributed by T10. ATP is bound by residues 10–11 and H18; that span reads TF. Residues A77 and R91 each contribute to the substrate site. ATP contacts are provided by residues 92–94, E102, and 127–133; these read GLR and YSFISSS.

The protein belongs to the bacterial CoaD family. As to quaternary structure, homohexamer. Mg(2+) is required as a cofactor.

The protein localises to the cytoplasm. The catalysed reaction is (R)-4'-phosphopantetheine + ATP + H(+) = 3'-dephospho-CoA + diphosphate. The protein operates within cofactor biosynthesis; coenzyme A biosynthesis; CoA from (R)-pantothenate: step 4/5. Functionally, reversibly transfers an adenylyl group from ATP to 4'-phosphopantetheine, yielding dephospho-CoA (dPCoA) and pyrophosphate. This chain is Phosphopantetheine adenylyltransferase, found in Thermomicrobium roseum (strain ATCC 27502 / DSM 5159 / P-2).